Here is a 404-residue protein sequence, read N- to C-terminus: Cysteine desulfurase IscS (404 aa).

Residues 75–76 (AT), Asn155, Gln183, and 203–205 (SSH) each bind pyridoxal 5'-phosphate. Lys206 carries the post-translational modification N6-(pyridoxal phosphate)lysine. Pyridoxal 5'-phosphate is bound at residue Thr243. The Cysteine persulfide intermediate role is filled by Cys328. Cys328 is a binding site for [2Fe-2S] cluster.

Belongs to the class-V pyridoxal-phosphate-dependent aminotransferase family. NifS/IscS subfamily. Homodimer. Forms a heterotetramer with IscU, interacts with other sulfur acceptors. The cofactor is pyridoxal 5'-phosphate.

It localises to the cytoplasm. The enzyme catalyses (sulfur carrier)-H + L-cysteine = (sulfur carrier)-SH + L-alanine. It participates in cofactor biosynthesis; iron-sulfur cluster biosynthesis. In terms of biological role, master enzyme that delivers sulfur to a number of partners involved in Fe-S cluster assembly, tRNA modification or cofactor biosynthesis. Catalyzes the removal of elemental sulfur atoms from cysteine to produce alanine. Functions as a sulfur delivery protein for Fe-S cluster synthesis onto IscU, an Fe-S scaffold assembly protein, as well as other S acceptor proteins. This chain is Cysteine desulfurase IscS, found in Pasteurella multocida (strain Pm70).